Consider the following 349-residue polypeptide: Increased DNA methylation 2 (349 aa).

Residues 210-230 are disordered; the sequence is EDNAGTCTSGEESDVAAKPEV. The region spanning 233 to 349 is the sHSP domain; the sequence is EAHGGLMVGL…VMKNLQKQTV (117 aa).

It belongs to the small heat shock protein (HSP20) family. Homodimer or oligomer. May form an 16-mer complex. Interacts with MBD7 (via C-terminus). Interacts with IDM1 (via N-terminus). Interacts with IMD3. Part of a complex made of MBD7, IDM1, IDM2, IDM3 and ROS1. In terms of tissue distribution, expressed in cotyledons and hypocotyls in young seedlings.

It localises to the nucleus. The protein resides in the nucleoplasm. In terms of biological role, prevents DNA hypermethylation and transcriptional silencing of transgenes and of some endogenous genes. May act as a molecular chaperone of IDM1, regulating its H3K18 acetylation activity. In Arabidopsis thaliana (Mouse-ear cress), this protein is Increased DNA methylation 2.